Here is a 409-residue protein sequence, read N- to C-terminus: ATPase ASNA1 homolog (409 aa).

Position 21 to 28 (21 to 28) interacts with ATP; sequence KGGVGKTT. Aspartate 62 is a catalytic residue. 2 residues coordinate ATP: glutamate 303 and asparagine 330. 2 residues coordinate Zn(2+): cysteine 342 and cysteine 345.

The protein belongs to the arsA ATPase family. As to quaternary structure, homodimer.

The protein localises to the cytoplasm. It is found in the endoplasmic reticulum. Its function is as follows. ATPase required for the post-translational delivery of tail-anchored (TA) proteins to the endoplasmic reticulum. Recognizes and selectively binds the transmembrane domain of TA proteins in the cytosol. This complex then targets to the endoplasmic reticulum by membrane-bound receptors, where the tail-anchored protein is released for insertion. This process is regulated by ATP binding and hydrolysis. ATP binding drives the homodimer towards the closed dimer state, facilitating recognition of newly synthesized TA membrane proteins. ATP hydrolysis is required for insertion. Subsequently, the homodimer reverts towards the open dimer state, lowering its affinity for the membrane-bound receptor, and returning it to the cytosol to initiate a new round of targeting. The sequence is that of ATPase ASNA1 homolog from Leishmania major.